We begin with the raw amino-acid sequence, 341 residues long: ATPase GET3 (341 aa).

34–41 (KGGVGKTT) provides a ligand contact to ATP. Asp63 is an active-site residue. Positions 245 and 272 each coordinate ATP. Positions 283 and 286 each coordinate Zn(2+).

Belongs to the arsA ATPase family. As to quaternary structure, homodimer.

It is found in the cytoplasm. The protein localises to the endoplasmic reticulum. ATPase required for the post-translational delivery of tail-anchored (TA) proteins to the endoplasmic reticulum. Recognizes and selectively binds the transmembrane domain of TA proteins in the cytosol. This complex then targets to the endoplasmic reticulum by membrane-bound receptors, where the tail-anchored protein is released for insertion. This process is regulated by ATP binding and hydrolysis. ATP binding drives the homodimer towards the closed dimer state, facilitating recognition of newly synthesized TA membrane proteins. ATP hydrolysis is required for insertion. Subsequently, the homodimer reverts towards the open dimer state, lowering its affinity for the membrane-bound receptor, and returning it to the cytosol to initiate a new round of targeting. In Ajellomyces dermatitidis (strain ER-3 / ATCC MYA-2586) (Blastomyces dermatitidis), this protein is ATPase GET3.